Reading from the N-terminus, the 356-residue chain is uncharacterized protein (356 aa).

An N-terminal signal peptide occupies residues 1 to 21 (MKLITAPCRALLALPFCYAFS).

This is an uncharacterized protein from Escherichia coli (strain K12).